Consider the following 119-residue polypeptide: Fluoride-specific ion channel FluC (119 aa).

4 consecutive transmembrane segments (helical) span residues 5–25 (ILPLSIGAIFGTTARWLLNLA), 30–50 (LSPATGNLFANWTGALLIGIF), 59–79 (WKLLLITGFFGSLTTLSGFSL), and 92–112 (SALANIFLHTAGSLLLTWLGL). Residues Gly69 and Thr72 each contribute to the Na(+) site.

It belongs to the fluoride channel Fluc/FEX (TC 1.A.43) family.

The protein localises to the cell inner membrane. It carries out the reaction fluoride(in) = fluoride(out). With respect to regulation, na(+) is not transported, but it plays an essential structural role and its presence is essential for fluoride channel function. Functionally, fluoride-specific ion channel. Important for reducing fluoride concentration in the cell, thus reducing its toxicity. The polypeptide is Fluoride-specific ion channel FluC (Neisseria gonorrhoeae (strain NCCP11945)).